A 33-amino-acid chain; its full sequence is Photosystem II reaction center protein Psb30 (33 aa).

Residues 5–25 (VLAQLTVLTLIVISGPLVIAL) form a helical membrane-spanning segment.

The protein belongs to the Psb30/Ycf12 family. PSII is composed of 1 copy each of membrane proteins PsbA, PsbB, PsbC, PsbD, PsbE, PsbF, PsbH, PsbI, PsbJ, PsbK, PsbL, PsbM, PsbT, PsbX, PsbY, PsbZ, Psb30/Ycf12, peripheral proteins of the oxygen-evolving complex and a large number of cofactors. It forms dimeric complexes.

It localises to the plastid. The protein resides in the chloroplast thylakoid membrane. A core subunit of photosystem II (PSII), probably helps stabilize the reaction center. The polypeptide is Photosystem II reaction center protein Psb30 (Cycas taitungensis (Prince sago)).